The sequence spans 302 residues: Citrate lyase subunit beta (302 aa).

Residues Arg-69 and Glu-132 each coordinate substrate. Residues Glu-132 and Asp-159 each contribute to the Mg(2+) site.

Belongs to the HpcH/HpaI aldolase family. Citrate lyase beta subunit subfamily. As to quaternary structure, oligomer with a subunit composition of (alpha,beta,gamma)6. Requires Mg(2+) as cofactor.

It is found in the cytoplasm. The enzyme catalyses citrate = oxaloacetate + acetate. It catalyses the reaction (3S)-citryl-CoA = oxaloacetate + acetyl-CoA. In terms of biological role, represents a citryl-ACP lyase. The polypeptide is Citrate lyase subunit beta (citE) (Leuconostoc mesenteroides subsp. cremoris).